The sequence spans 635 residues: MITITLPDGSRREFEGPVSVMQVAHAIGPGLAKATIAGQIDGGHLVDASDLIEHDAMLRIITPEDQEALDIIRHSCAHLVGHAVKQLYPEAKMVIGPVIADGFYYDIYSKRPFTPEDLAAIEQRMVELIAQDYHVVKHITARHDVVRLFKERGEDYKLRLIEEMGPEVTAMGIYHHQEYVDMCRGPHVPNTRFLKAFKLTRISGAYWRGDTKNEQLQRIYGTAWADKKQLEAHMQRLQDAEKRDHRKIGKVQDLFHLQEEGPGLVFWHPKGWVIWQTIENYIRRVYRNSGYGELRCPQILDVSLWQKSGHWDNYKENMFFTDSEKRTYAVKPMNCPGHVQVFNQGLHSYRDLPIRYGEFGACHRNEPSGALHGLLRVRGFTQDDGHIFCTEAQIESEVTAFHRQALQVYADFGFEDIQIKIALRPDKRLGDSLSWDKAEAALRAALSACEVEWQELPGEGAFYGPKIEYHLKDAIGRTWQLGTIQVDFMMPGRLGAEYVDERSQRCHPVMLHRAIVGSMERFIGILIEHYAGIWPTWLAPVQVVVANITDAQYEYAERVHKALLNQGFRVNTDLRNEKIGYKIREHTLQRVPYLLVVGDREKENGTVAVRTCSREDLGAMSISAFVERLQAEQVV.

The region spanning 1–62 is the TGS domain; that stretch reads MITITLPDGS…EHDAMLRIIT (62 aa). The segment at 244 to 535 is catalytic; it reads DHRKIGKVQD…LIEHYAGIWP (292 aa). Zn(2+)-binding residues include Cys-335, His-386, and His-512.

It belongs to the class-II aminoacyl-tRNA synthetase family. As to quaternary structure, homodimer. Zn(2+) serves as cofactor.

It localises to the cytoplasm. It carries out the reaction tRNA(Thr) + L-threonine + ATP = L-threonyl-tRNA(Thr) + AMP + diphosphate + H(+). Functionally, catalyzes the attachment of threonine to tRNA(Thr) in a two-step reaction: L-threonine is first activated by ATP to form Thr-AMP and then transferred to the acceptor end of tRNA(Thr). Also edits incorrectly charged L-seryl-tRNA(Thr). In Xylella fastidiosa (strain 9a5c), this protein is Threonine--tRNA ligase.